The following is a 1465-amino-acid chain: DNA polymerase alpha catalytic subunit (1465 aa).

2 disordered regions span residues 20–39 (GSFA…GRQE) and 105–135 (LEDD…PSVT). The span at 26–35 (RARREKKSKK) shows a compositional bias: basic residues. Position 180 is a phosphothreonine (threonine 180). Phosphoserine is present on residues serine 192 and serine 215. Residue lysine 230 is modified to N6-acetyllysine. The disordered stretch occupies residues 261–297 (DESMDTEKVDEKPVTAKTWDQETEPVERVEHEADPER). Basic and acidic residues-rich tracts occupy residues 265–274 (DTEKVDEKPV) and 285–297 (PVER…DPER). The tract at residues 654 to 719 (RINECKVPYW…YHLSELVQQI (66 aa)) is DNA-binding. Lysine 974 bears the N6-succinyllysine mark. Residues 1249–1380 (QFRVHQYHKD…NGPLCPVCMK (132 aa)) form a DNA-binding region. 8 residues coordinate Zn(2+): cysteine 1287, cysteine 1290, cysteine 1314, cysteine 1319, cysteine 1352, cysteine 1357, cysteine 1375, and cysteine 1378. The segment at 1287-1317 (CPSCGTENIYDNVFEGSGLDMEPSLYRCSNV) adopts a CysA-type zinc-finger fold. Residues 1352–1378 (CEEPTCCSRLRRLPLHFSRNGPLCPVC) carry the CysB motif motif.

Belongs to the DNA polymerase type-B family. In terms of assembly, component of the alpha DNA polymerase complex (also known as the alpha DNA polymerase-primase complex) consisting of four subunits: the catalytic subunit POLA1, the regulatory subunit POLA2, and the primase complex subunits PRIM1 and PRIM2 respectively. Within the complex, POLA1 directly interacts with PRIM2. Interacts with PARP1; this interaction functions as part of the control of replication fork progression. Interacts with MCM10 and WDHD1; these interactions recruit the polymerase alpha complex to the pre-replicative complex bound to DNA. Interacts with RPA1; this interaction stabilizes the replicative complex and reduces the misincorporation rate of DNA polymerase alpha by acting as a fidelity clamp. In terms of tissue distribution, expressed in those zones containing proliferating cells in the developing embryonic neocortex, as well as in the lateral and medial ganglionic eminences. After birth, expressed in cells that remain proliferating in the ventricular and subventricular zone of the striatum.

Its subcellular location is the nucleus. It localises to the cytoplasm. It is found in the cytosol. It carries out the reaction DNA(n) + a 2'-deoxyribonucleoside 5'-triphosphate = DNA(n+1) + diphosphate. Its function is as follows. Catalytic subunit of the DNA polymerase alpha complex (also known as the alpha DNA polymerase-primase complex) which plays an essential role in the initiation of DNA synthesis. During the S phase of the cell cycle, the DNA polymerase alpha complex (composed of a catalytic subunit POLA1, a regulatory subunit POLA2 and two primase subunits PRIM1 and PRIM2) is recruited to DNA at the replicative forks via direct interactions with MCM10 and WDHD1. The primase subunit of the polymerase alpha complex initiates DNA synthesis by oligomerising short RNA primers on both leading and lagging strands. These primers are initially extended by the polymerase alpha catalytic subunit and subsequently transferred to polymerase delta and polymerase epsilon for processive synthesis on the lagging and leading strand, respectively. The reason this transfer occurs is because the polymerase alpha has limited processivity and lacks intrinsic 3' exonuclease activity for proofreading error, and therefore is not well suited for replicating long complexes. In the cytosol, responsible for a substantial proportion of the physiological concentration of cytosolic RNA:DNA hybrids, which are necessary to prevent spontaneous activation of type I interferon responses. This chain is DNA polymerase alpha catalytic subunit (Pola1), found in Mus musculus (Mouse).